A 267-amino-acid polypeptide reads, in one-letter code: MKVGIDAGGTLIKIIQEQDNQRTFKTELTKNIDQVVEWLNQQQIEKLCLTGGNAGVIAENINIPAQIFVEFDAASQGLGILLKEQGHDLADYIFANVGTGTSLHYFDGQSQRRVGGIGTGGGMIQGLGYLLSQITDYKQLTDMAQHGDRNTIDLKVRHIYKDTEPPIPGDLTAANFGHVLHHLDADFTPSNKLAAVIGVVGEVVTTMAITVAREFKTENIVYIGSSFHNNALLRKVVEDYTVLRGCKPYYVENGAFSGAIGALYLEK.

6-13 (DAGGTLIK) contributes to the ATP binding site. Glutamate 70 functions as the Proton acceptor in the catalytic mechanism. ATP is bound by residues threonine 99, 121-125 (GGMIQ), tyrosine 137, and serine 225.

Belongs to the type II pantothenate kinase family. Homodimer.

The protein resides in the cytoplasm. It catalyses the reaction (R)-pantothenate + ATP = (R)-4'-phosphopantothenate + ADP + H(+). The protein operates within cofactor biosynthesis; coenzyme A biosynthesis; CoA from (R)-pantothenate: step 1/5. Its function is as follows. Catalyzes the phosphorylation of pantothenate (Pan), the first step in CoA biosynthesis. The protein is Type II pantothenate kinase of Staphylococcus aureus (strain bovine RF122 / ET3-1).